A 422-amino-acid chain; its full sequence is Histidine--tRNA ligase (422 aa).

The protein belongs to the class-II aminoacyl-tRNA synthetase family. As to quaternary structure, homodimer.

Its subcellular location is the cytoplasm. It carries out the reaction tRNA(His) + L-histidine + ATP = L-histidyl-tRNA(His) + AMP + diphosphate + H(+). In Lysinibacillus sphaericus (strain C3-41), this protein is Histidine--tRNA ligase.